The sequence spans 822 residues: Nose resistant to fluoxetine protein 6 (822 aa).

A signal peptide spans 1–24 (MGNMRRLLIFAVLVILTVISNSKS). Asn236 is a glycosylation site (N-linked (GlcNAc...) asparagine). Helical transmembrane passes span 306–326 (LAMF…FGTL), 617–637 (PYIR…LNAW), and 655–675 (IICW…LYWF).

Belongs to the acyltransferase 3 family. As to expression, in L1 larvae through to adult, hyp3 and hyp5, the most anterior cells in the hypodermis, and in intestine. Other hypodermal cells show weaker expression.

It is found in the membrane. Plays a role in the uptake of a range of molecules including lipids and xenobiotic compounds from the intestine to surrounding tissues. Mediates transport of lipids from intestine to the reproductive tract. Required for efficient yolk transport into oocytes. Vital for embryonic development. The polypeptide is Nose resistant to fluoxetine protein 6 (nrf-6) (Caenorhabditis elegans).